We begin with the raw amino-acid sequence, 114 residues long: uncharacterized protein (114 aa).

The tract at residues 90-114 (VESSQKRKPEESTIGMDAPKKMKRG) is disordered.

This is an uncharacterized protein from Caenorhabditis elegans.